The chain runs to 349 residues: 4-hydroxy-2-oxovalerate aldolase 2 (349 aa).

Residues 12–264 enclose the Pyruvate carboxyltransferase domain; it reads VRMTDTSLRD…KTGIDFFDIA (253 aa). 20–21 contacts substrate; sequence RD. Residue Asp-21 coordinates Mn(2+). The Proton acceptor role is filled by His-24. Residues Ser-174 and His-203 each coordinate substrate. Positions 203 and 205 each coordinate Mn(2+). Tyr-294 is a binding site for substrate.

The protein belongs to the 4-hydroxy-2-oxovalerate aldolase family.

It catalyses the reaction (S)-4-hydroxy-2-oxopentanoate = acetaldehyde + pyruvate. This Mycolicibacterium smegmatis (strain ATCC 700084 / mc(2)155) (Mycobacterium smegmatis) protein is 4-hydroxy-2-oxovalerate aldolase 2 (bphI-2).